Reading from the N-terminus, the 391-residue chain is Septation protein etd1 (391 aa).

Positions 49 to 68 are disordered; sequence MKSYGSDITPRRPKQLGLPK.

Involved in septation. In Schizosaccharomyces pombe (strain 972 / ATCC 24843) (Fission yeast), this protein is Septation protein etd1 (etd1).